The sequence spans 836 residues: ATP-binding cassette sub-family B member 6 (836 aa).

The Lumenal portion of the chain corresponds to 1 to 26 (MVTVGNYCEAEGPAGPAWTQNGLSPC). Positions 1 to 205 (MVTVGNYCEA…SGGLFILGLW (205 aa)) are required for the lysosomal targeting. Positions 1 to 236 (MVTVGNYCEA…RNQGRSTDPR (236 aa)) are required for ATPase activity. Cys-8 and Cys-26 are joined by a disulfide. The chain crosses the membrane as a helical span at residues 27–47 (FFYTLVPSTLMTLGVLALVLV). At 48-72 (LPCRRREVPAGTEELSWAAGPRVAP) the chain is on the cytoplasmic side. Residues 73–93 (YALQLSLAILQMALPLASLAG) form a helical membrane-spanning segment. Topologically, residues 94–106 (RVGTARGVRLPGY) are lumenal. A helical membrane pass occupies residues 107-127 (LLLASVLESLASACGLWLLVV). The Cytoplasmic portion of the chain corresponds to 128 to 147 (ERSQARQSLAMGVWMKFRHS). The helical transmembrane segment at 148–168 (LGLLLLWTVTFAAENLVLVSW) threads the bilayer. Residues 169–185 (NSPQWWWSRADLGQQVQ) are Lumenal-facing. A helical membrane pass occupies residues 186–206 (FGLWVLRYMTSGGLFILGLWA). Residues 207–264 (PGLRPQSYTLHVNEEDQDGGRNQGRSTDPRSTWRDLGRKLRLLSGYLWPRGSPSLQLT) lie on the Cytoplasmic side of the membrane. The chain crosses the membrane as a helical span at residues 265–285 (VLLCMGLMGLDRALNVLVPIF). The 292-residue stretch at 265 to 556 (VLLCMGLMGL…FGTYYRMIQT (292 aa)) folds into the ABC transmembrane type-1 domain. The Lumenal segment spans residues 286–305 (YRDIVNLLTSKAPWSSLAWT). A helical membrane pass occupies residues 306–326 (VTTYVFLKFLQGGGTGSTGFV). At 327 to 375 (SNLRTFLWIRVQQFTSRGVELRLFSHLHELSLRWHLGRRTGEVLRIVDR) the chain is on the cytoplasmic side. Residues 376–396 (GTSSVTGLLSYLVFNIIPTLA) form a helical membrane-spanning segment. Asp-397 is a topological domain (lumenal). A helical transmembrane segment spans residues 398–418 (IIIGIIYFSMFFNAWFGLIVF). At 419-499 (LCMSLYLILT…STASLVLLNQ (81 aa)) the chain is on the cytoplasmic side. The chain crosses the membrane as a helical span at residues 500-520 (TQNMVIGFGLLAGSLLCAYFV). Residues 521 to 529 (SERRLQVGD) lie on the Lumenal side of the membrane. A helical membrane pass occupies residues 530-550 (FVLFGTYITQLYMPLNWFGTY). Residues 551 to 836 (YRMIQTNFID…QGQETVPEDS (286 aa)) are Cytoplasmic-facing. The ABC transporter domain maps to 590–824 (VEFENVHFSY…GGVYAEMWQL (235 aa)). ATP-binding positions include Tyr-599 and 623 to 634 (GPSGAGKSTILR).

The protein belongs to the ABC transporter superfamily. ABCB family. Heavy Metal importer (TC 3.A.1.210) subfamily. As to quaternary structure, homodimer. Post-translationally, N-glycosylated. As to expression, ubiquitously expressed. Highly expressed in testis by meiotic pachytene spermatocytes and post-meiotic early spermatids.

The protein resides in the cell membrane. Its subcellular location is the mitochondrion outer membrane. It localises to the endoplasmic reticulum membrane. The protein localises to the golgi apparatus membrane. It is found in the endosome membrane. The protein resides in the lysosome membrane. Its subcellular location is the late endosome membrane. It localises to the early endosome membrane. The protein localises to the secreted. It is found in the extracellular exosome. The protein resides in the mitochondrion. Its subcellular location is the endosome. It localises to the multivesicular body membrane. The protein localises to the melanosome membrane. The enzyme catalyses heme b(in) + ATP + H2O = heme b(out) + ADP + phosphate + H(+). It carries out the reaction coproporphyrin III(in) + ATP + H2O = coproporphyrin III(out) + ADP + phosphate + H(+). The catalysed reaction is pheophorbide a(in) + ATP + H2O = pheophorbide a(out) + ADP + phosphate + H(+). It catalyses the reaction coproporphyrinogen III(in) + ATP + H2O = coproporphyrinogen III(out) + ADP + phosphate + H(+). The enzyme catalyses protoporphyrin IX(in) + ATP + H2O = protoporphyrin IX(out) + ADP + phosphate + H(+). It carries out the reaction coproporphyrin I(in) + ATP + H2O = coproporphyrin I(out) + ADP + phosphate + H(+). The catalysed reaction is uroporphyrin I(in) + ATP + H2O = uroporphyrin I(out) + ADP + phosphate + H(+). It catalyses the reaction uroporphyrin III(in) + ATP + H2O = uroporphyrin III(out) + ADP + phosphate + H(+). ATP-dependent transporter that catalyzes the transport of a broad-spectrum of porphyrins from the cytoplasm to the extracellular space through the plasma membrane or into the vesicle lumen. May also function as an ATP-dependent importer of porphyrins from the cytoplasm into the mitochondria, in turn may participate in the de novo heme biosynthesis regulation and in the coordination of heme and iron homeostasis during phenylhydrazine stress. May play a key role in the early steps of melanogenesis producing PMEL amyloid fibrils. In vitro, it confers to cells a resistance to toxic metal such as arsenic and cadmium and against chemotherapeutics agent such as 5-fluorouracil, SN-38 and vincristin. In addition may play a role in the transition metal homeostasis. This is ATP-binding cassette sub-family B member 6 from Rattus norvegicus (Rat).